The sequence spans 344 residues: MKAIFVLNAAPKDNTWYAGGKLGWSQYHDTGFYGNGFQNNNGPTRNDQLGAGAFGGYQVNPYLGFEMGYDWLGRMAYKGSVDNGAFKAQGVQLTAKLGYPITDDLDIYTRLGGMVWRADSKGNYASTGVSRSEHDTGVSPVFAGGVEWAVTRDIATRLEYQWVNNIGDAGTVGTRPDNGMLSLGVSYRFGQEDAAPVVAPAPAPAPEVATKHFTLKSDVLFNFNKATLKPEGQQALDQLYTQLSNMDPKDGSAVVLGYTDRIGSEAYNQQLSEKRAQSVVDYLVAKGIPAGKISARGMGESNPVTGNTCDNVKARAALIDCLAPDRRVEIEVKGYKEVVTQPQA.

Over 1 to 14 (MKAIFVLNAAPKDN) the chain is Periplasmic. A beta stranded transmembrane segment spans residues 15–24 (TWYAGGKLGW). Over 25–49 (SQYHDTGFYGNGFQNNNGPTRNDQL) the chain is Extracellular. A beta stranded transmembrane segment spans residues 50-59 (GAGAFGGYQV). The Periplasmic portion of the chain corresponds to 60–62 (NPY). A beta stranded membrane pass occupies residues 63–71 (LGFEMGYDW). Residues 72 to 89 (LGRMAYKGSVDNGAFKAQ) are Extracellular-facing. A beta stranded membrane pass occupies residues 90–100 (GVQLTAKLGYP). Residues 101 to 104 (ITDD) lie on the Periplasmic side of the membrane. Residues 105-114 (LDIYTRLGGM) traverse the membrane as a beta stranded segment. Over 115 to 139 (VWRADSKGNYASTGVSRSEHDTGVS) the chain is Extracellular. The chain crosses the membrane as a beta stranded span at residues 140–149 (PVFAGGVEWA). Over 150–153 (VTRD) the chain is Periplasmic. A beta stranded transmembrane segment spans residues 154–162 (IATRLEYQW). At 163 to 179 (VNNIGDAGTVGTRPDNG) the chain is on the extracellular side. Residues 180 to 188 (MLSLGVSYR) form a beta stranded membrane-spanning segment. Over 189–344 (FGQEDAAPVV…YKEVVTQPQA (156 aa)) the chain is Periplasmic. 4 consecutive repeat copies span residues 199 to 200 (AP), 201 to 202 (AP), 203 to 204 (AP), and 205 to 206 (AP). The 4 X 2 AA tandem repeats of A-P stretch occupies residues 199 to 206 (APAPAPAP). One can recognise an OmpA-like domain in the interval 208-336 (VATKHFTLKS…RVEIEVKGYK (129 aa)). C309 and C321 are disulfide-bonded.

This sequence belongs to the outer membrane OOP (TC 1.B.6) superfamily. OmpA family. In terms of assembly, monomer and homodimer.

It localises to the cell outer membrane. In terms of biological role, with TolR probably plays a role in maintaining the position of the peptidoglycan cell wall in the periplasm. Acts as a porin with low permeability that allows slow penetration of small solutes; an internal gate slows down solute passage. Required for conjugation with F-type plasmids; probably serves as the mating receptor on recipient cells. This is Outer membrane protein A from Klebsiella pneumoniae.